The chain runs to 262 residues: Acyl-[acyl-carrier-protein]--UDP-N-acetylglucosamine O-acyltransferase (262 aa).

It belongs to the transferase hexapeptide repeat family. LpxA subfamily. In terms of assembly, homotrimer.

Its subcellular location is the cytoplasm. It carries out the reaction a (3R)-hydroxyacyl-[ACP] + UDP-N-acetyl-alpha-D-glucosamine = a UDP-3-O-[(3R)-3-hydroxyacyl]-N-acetyl-alpha-D-glucosamine + holo-[ACP]. The protein operates within glycolipid biosynthesis; lipid IV(A) biosynthesis; lipid IV(A) from (3R)-3-hydroxytetradecanoyl-[acyl-carrier-protein] and UDP-N-acetyl-alpha-D-glucosamine: step 1/6. Involved in the biosynthesis of lipid A, a phosphorylated glycolipid that anchors the lipopolysaccharide to the outer membrane of the cell. This Burkholderia ambifaria (strain MC40-6) protein is Acyl-[acyl-carrier-protein]--UDP-N-acetylglucosamine O-acyltransferase.